The chain runs to 339 residues: RNA polymerase principal sigma factor HrdC (339 aa).

Residues 1 to 10 (MAPTARTPTA) show a composition bias toward low complexity. Disordered regions lie at residues 1–37 (MAPT…EEPD) and 71–101 (REEL…DGQE). The span at 91–101 (TLEETVHDGQE) shows a compositional bias: basic and acidic residues. Residues 130–143 (DVIQEGNLGLIRAV) carry the Polymerase core binding motif. Residues 300-319 (LQQVAQHVGLTRERVRQLEK) constitute a DNA-binding region (H-T-H motif).

The protein belongs to the sigma-70 factor family. In terms of assembly, interacts transiently with the RNA polymerase catalytic core.

Functionally, sigma factors are initiation factors that promote the attachment of RNA polymerase to specific initiation sites and are then released. This chain is RNA polymerase principal sigma factor HrdC (hrdC), found in Streptomyces coelicolor (strain ATCC BAA-471 / A3(2) / M145).